We begin with the raw amino-acid sequence, 300 residues long: Ribosomal RNA small subunit methyltransferase H (300 aa).

S-adenosyl-L-methionine is bound by residues 36–38, D55, L89, D103, and Q110; that span reads GGH.

It belongs to the methyltransferase superfamily. RsmH family.

Its subcellular location is the cytoplasm. The catalysed reaction is cytidine(1402) in 16S rRNA + S-adenosyl-L-methionine = N(4)-methylcytidine(1402) in 16S rRNA + S-adenosyl-L-homocysteine + H(+). Specifically methylates the N4 position of cytidine in position 1402 (C1402) of 16S rRNA. In Thermotoga neapolitana (strain ATCC 49049 / DSM 4359 / NBRC 107923 / NS-E), this protein is Ribosomal RNA small subunit methyltransferase H.